The sequence spans 1394 residues: MVDNYHSSLDVAKTPIQSDADAQKSEAETEGPSSKSSQIAAGESIADSVRNFLELRQGGIPDDTGVVFDKISAVGSGTGSQDAPTVTSAAQSAFGLLSPLQNRQRKQYSRPILSGFSGTINPGEMLLVLGKPGSGCTTFLKTLSGLWDEYKEIQGELTLGGHPLLDVMKQRPQDILFCAESDDHFPTLTVAETLRFATRARCGPQVSAREIDTMVTQLAKLVGLGNVLNTKVGDAKIRGVSGGERRRVSLAEALATCARLICLDNPTHGLDSSTAVEFMEMMREWTTQSRCVAAMSVYQASDAIVSYFDKVLIINSGRQIYYGPVRDAKAYFEDLGFECLSTTTVADFLNVMSADPDVRRAQENRENQVPRTAEEFERAFSASPIYQEMQKSVQVAKERFQTNPSPLVKTSAFALPIWHQIWYCAGRQFRIVTSDYSLWAVELATIVVQSLVLGTLFRNQQRTTSSLFIFASALFYSVLVPALQSMAEFGNGFAQRPLILKQKRYQISRPIAYALGLVTTDVVWKVAAICYNIPLYFLTGFQRTAGNFFTWFLIIYLEHLALSMFFRSVAIFSPNMHRAVLPVGIFFNMYVLYTGLYVPAPQMQVWLGWLRYLNPLYYAFESVMVNEFRDLSYQCSASDPVPSGLGYNDMAHQVCAVVGSEPGDRLLSGASYIHAQYGFKTSHLWRNVGINAALFVFFALCSGIGMEMLKTPAGQLATVFYKSSPGVTHRRDKIDSETGQDQGNESSEMSAGQSNDALRLQEHQGPDKSHNLAWTNLCLDIKTKEGDQRLLNNLSGSVKSGQLKALMGVSGAGKTTLLNALAGRSTIGNLTGTLALNGQVLPTFFRSRMGYVQQQDIHLPTQTVREALQMTARLRRPESISVADKNAYVEKVIEWLSMEHIADALVGVPGAGLNLEQRKKVSIGVEMASKPEILFLDEPTSGLDGQSAMLIARLLRRLADSGQAILCTIHQPAAELIDQFDKLYLLSRGGNLVYDGSLGTRCHEAIQYFQPRSRPCGPEENPAEYFLAVIGAGSRNDAHMDWASLWNDSEQGKEREKAEESLVPAAEQAPQLEQQSLYSVPFHVQLWVVVQRTWLYYWREPDYVNSKLWMSVGNSLLNSLTHLQSPNTERGAYNRVFSAFMSLIVGPPLGLQVQPRFVTLRDIFVHRERESLTYHWLAFVLSAFIVELPFTFLSSLVYWLLWYFPVGYFNAPSRAGYSFLMYELFGVFATSLAQLCASLMPNIEAAFAANGFFFMFCNTFAGTLSPKPVTPSGWRWFYNISPLFYLGEGVTVDVLQDLPIRCEESEVSIFYAVNGTTCGQYAQDFLKTATGYLLNPASTTECQYCRYRDGQSYFQQYGYEFAHRHRNIGVFICFIAFNFTMVLVMTYLTKTRRH.

The disordered stretch occupies residues 1 to 41 (MVDNYHSSLDVAKTPIQSDADAQKSEAETEGPSSKSSQIAA). In terms of domain architecture, ABC transporter 1 spans 98–341 (SPLQNRQRKQ…FEDLGFECLS (244 aa)). 6 consecutive transmembrane segments (helical) span residues 437-457 (SLWA…GTLF), 467-487 (LFIF…QSMA), 511-531 (IAYA…AICY), 546-566 (GNFF…SMFF), 579-599 (AVLP…LYVP), and 688-708 (VGIN…GMEM). Positions 727-755 (VTHRRDKIDSETGQDQGNESSEMSAGQSN) are disordered. Positions 737 to 755 (ETGQDQGNESSEMSAGQSN) are enriched in polar residues. The 247-residue stretch at 767–1013 (DKSHNLAWTN…EAIQYFQPRS (247 aa)) folds into the ABC transporter 2 domain. Residue 808–815 (GVSGAGKT) coordinates ATP. Helical transmembrane passes span 1131-1151 (GAYN…PLGL), 1177-1197 (LAFV…SSLV), 1219-1239 (FLMY…CASL), 1245-1265 (AAFA…GTLS), 1280-1300 (ISPL…DLPI), and 1368-1388 (IGVF…MTYL).

Belongs to the ABC transporter superfamily. ABCG family. PDR (TC 3.A.1.205) subfamily.

Its subcellular location is the vacuole membrane. It is found in the cell membrane. It participates in mycotoxin biosynthesis; patulin biosynthesis. In terms of biological role, ABC transporter; part of the gene cluster that mediates the biosynthesis of patulin, an acetate-derived tetraketide mycotoxin produced by several fungal species that shows antimicrobial properties against several bacteria. May be involved in the secretion of E-ascladiol to be converted to patulin by the secreted patulin synthase patE. In Penicillium expansum (Blue mold rot fungus), this protein is ABC transporter patM.